Consider the following 621-residue polypeptide: Leucine aminopeptidase (621 aa).

A propeptide spanning residues 1-73 (MPLLRSSQHI…ISNRKEFRKM (73 aa)) is cleaved from the precursor. The segment at 129–152 (SSSGGSGGNGGSAGSSGNGEGGAQ) is disordered. The span at 132-150 (GGSGGNGGSAGSSGNGEGG) shows a compositional bias: gly residues. Positions 390, 395, and 402 each coordinate a peptide. Residues K390 and D395 each contribute to the Zn(2+) site. Residues 400-417 (NLKAAPGSMIDLMKFDMS) are L13 loop. K402 is an active-site residue. Zn(2+) is bound by residues D410, M412, D415, D475, and E477. A peptide-binding residues include D415 and D475. R479 is an active-site residue.

The protein belongs to the peptidase M17 family. In terms of assembly, homohexamer composed of dimer of trimers. Both the identity and concentration of metal ions available dictate the extent to which oligomerization occurs; Mn(2+) and Co(2+) induces oligomerization, whereas Mg(2+) has no effect, and Zn(2+) causes irreversible protein aggregation in vitro. Requires Zn(2+) as cofactor.

The protein resides in the cytoplasm. It carries out the reaction Release of an N-terminal amino acid, Xaa-|-Yaa-, in which Xaa is preferably Leu, but may be other amino acids including Pro although not Arg or Lys, and Yaa may be Pro. Amino acid amides and methyl esters are also readily hydrolyzed, but rates on arylamides are exceedingly low.. It catalyses the reaction L-cysteinylglycine + H2O = L-cysteine + glycine. With respect to regulation, oligomerization is required for catalytic activity and is metal-dependent. The type of metal that binds the 2 metal binding sites influences catalytic activity and substrate specificity. In vitro, activated by Co(2+), Mn(2+), Ni(2+), Mg(2+) and Zn(2+) with decreasing strength. Occupancy of the site 2 is essential and sufficient for activating the enzyme but occupation of the 2 sites is necessary for full catalytic activity. Inhibited by Ca(2+). Inhibited by fungal metabolite bestatin. In terms of biological role, aminopeptidase which preferentially cleaves leucine residues from the N-terminus of peptides. Also, has some activity towards tryptophan and methionine and has very low activity towards alanine, arginine, asparagine, phenylalanine and tyrosine. No activity towards histidine, serine, valine, isoleucine, glycine, aspartic acid and glutamic acid. In addition, cleaves the Cys-Gly dipeptide, probably as part of the glutathione regulation pathway; cleavage only occurs in the presence of Mn(2+). Plays a role in the final step of host hemoglobin catabolism, by cleaving hemoglobin-derived oligopeptides providing a source of amino acids for the parasite protein synthesis and for the maintenance of osmotic homeostasis. The polypeptide is Leucine aminopeptidase (Plasmodium vivax (strain Salvador I)).